The sequence spans 271 residues: Orotidine 5'-phosphate decarboxylase (271 aa).

The active-site Proton donor is the lysine 97.

The protein belongs to the OMP decarboxylase family. Type 2 subfamily.

The enzyme catalyses orotidine 5'-phosphate + H(+) = UMP + CO2. Its pathway is pyrimidine metabolism; UMP biosynthesis via de novo pathway; UMP from orotate: step 2/2. In Leptospira borgpetersenii serovar Hardjo-bovis (strain L550), this protein is Orotidine 5'-phosphate decarboxylase.